Reading from the N-terminus, the 381-residue chain is Alkanesulfonate monooxygenase (381 aa).

Belongs to the SsuD family. In terms of assembly, homotetramer.

It carries out the reaction an alkanesulfonate + FMNH2 + O2 = an aldehyde + FMN + sulfite + H2O + 2 H(+). Catalyzes the desulfonation of aliphatic sulfonates. The protein is Alkanesulfonate monooxygenase of Escherichia coli O157:H7.